Here is a 279-residue protein sequence, read N- to C-terminus: Pantothenate synthetase (279 aa).

Methionine 30–histidine 37 is a binding site for ATP. Histidine 37 serves as the catalytic Proton donor. Glutamine 61 is a binding site for (R)-pantoate. Glutamine 61 lines the beta-alanine pocket. Glycine 147–aspartate 150 lines the ATP pocket. Glutamine 153 lines the (R)-pantoate pocket. Residues alanine 176 and leucine 184–arginine 187 contribute to the ATP site.

This sequence belongs to the pantothenate synthetase family. Homodimer.

It is found in the cytoplasm. The enzyme catalyses (R)-pantoate + beta-alanine + ATP = (R)-pantothenate + AMP + diphosphate + H(+). Its pathway is cofactor biosynthesis; (R)-pantothenate biosynthesis; (R)-pantothenate from (R)-pantoate and beta-alanine: step 1/1. Catalyzes the condensation of pantoate with beta-alanine in an ATP-dependent reaction via a pantoyl-adenylate intermediate. This Sphingopyxis alaskensis (strain DSM 13593 / LMG 18877 / RB2256) (Sphingomonas alaskensis) protein is Pantothenate synthetase.